The following is a 232-amino-acid chain: Protein lin-7 homolog A (232 aa).

The Kinase interacting site motif lies at 14-28; sequence MATLTVVQPLTLDRD. Positions 25–80 constitute an L27 domain; that stretch reads LDRDVARAIELLEKLQESGEVPVHKLQSLKKVLQSEFCTAIREVYQYMHETITVNG. The PDZ domain occupies 108-190; it reads VVELPKTDEG…SVKLVVRYTP (83 aa).

It belongs to the lin-7 family. In terms of assembly, forms a complex with CASK and CASKIN1. Component of the brain-specific heterotrimeric complex (LIN-10-LIN-2-LIN-7 complex) composed of at least APBA1, CASK, and LIN7, which associates with the motor protein KIF17 to transport vesicles along microtubules. Can also interact with other modular proteins containing protein-protein interaction domains like PALS1, PALS2, MPP7, DLG1, DLG2 and DLG3 through its L27 domain. Interacts with DLG4 and GRIN2B as well as CDH1 and CTNNB1, the channels KCNJ12/Kir2.2, KCNJ4/Kir2.3 and probably KCNJ2/Kir2.1 and SLC6A12/BGT-1 via its PDZ domain. The association of LIN7A with cadherin and beta-catenin is calcium-dependent, occurs at synaptic junctions and requires the actin cytoskeleton. Interacts with EGFR, ERBB2, ERBB3 and ERBB4 with both PDZ and KID domains. Associates with KIF17 via APBA1. Interacts with HTR4. Forms a tripartite complex composed of DLG1, MPP7 and LIN7 (LIN7A or LIN7C). Interacts with MARCHF11. As to expression, ubiquitously expressed in brain and detected in lung, liver and testis (at protein level). Expression was detected only in brain.

It is found in the cell membrane. Its subcellular location is the basolateral cell membrane. It localises to the cell junction. The protein localises to the postsynaptic density membrane. The protein resides in the tight junction. Plays a role in establishing and maintaining the asymmetric distribution of channels and receptors at the plasma membrane of polarized cells. Forms membrane-associated multiprotein complexes that may regulate delivery and recycling of proteins to the correct membrane domains. The tripartite complex composed of LIN7 (LIN7A, LIN7B or LIN7C), CASK and APBA1 associates with the motor protein KIF17 to transport vesicles containing N-methyl-D-aspartate (NMDA) receptor subunit NR2B along microtubules. This complex may have the potential to couple synaptic vesicle exocytosis to cell adhesion in brain. Ensures the proper localization of GRIN2B (subunit 2B of the NMDA receptor) to neuronal postsynaptic density and may function in localizing synaptic vesicles at synapses where it is recruited by beta-catenin and cadherin. Required to localize Kir2 channels, GABA transporter (SLC6A12) and EGFR/ERBB1, ERBB2, ERBB3 and ERBB4 to the basolateral membrane of epithelial cells. The sequence is that of Protein lin-7 homolog A (Lin7a) from Rattus norvegicus (Rat).